The sequence spans 355 residues: Probable butyrate kinase (355 aa).

This sequence belongs to the acetokinase family.

It localises to the cytoplasm. It catalyses the reaction butanoate + ATP = butanoyl phosphate + ADP. The polypeptide is Probable butyrate kinase (Listeria monocytogenes serovar 1/2a (strain ATCC BAA-679 / EGD-e)).